Here is an 880-residue protein sequence, read N- to C-terminus: Alanine--tRNA ligase (880 aa).

A disordered region spans residues 414-443 (TVDESEFESEMEKQRNRARKARSGGDTEGW). The Zn(2+) site is built by histidine 566, histidine 570, cysteine 668, and histidine 672.

It belongs to the class-II aminoacyl-tRNA synthetase family. Requires Zn(2+) as cofactor.

The protein localises to the cytoplasm. The catalysed reaction is tRNA(Ala) + L-alanine + ATP = L-alanyl-tRNA(Ala) + AMP + diphosphate. Its function is as follows. Catalyzes the attachment of alanine to tRNA(Ala) in a two-step reaction: alanine is first activated by ATP to form Ala-AMP and then transferred to the acceptor end of tRNA(Ala). Also edits incorrectly charged Ser-tRNA(Ala) and Gly-tRNA(Ala) via its editing domain. The chain is Alanine--tRNA ligase from Alkaliphilus metalliredigens (strain QYMF).